Reading from the N-terminus, the 246-residue chain is Probable transcriptional regulatory protein YebC (246 aa).

The tract at residues M1 to K20 is disordered.

This sequence belongs to the TACO1 family.

It is found in the cytoplasm. In Shigella boydii serotype 4 (strain Sb227), this protein is Probable transcriptional regulatory protein YebC.